A 70-amino-acid polypeptide reads, in one-letter code: Putative membrane protein insertion efficiency factor (70 aa).

It belongs to the UPF0161 family.

It is found in the cell inner membrane. In terms of biological role, could be involved in insertion of integral membrane proteins into the membrane. The chain is Putative membrane protein insertion efficiency factor from Francisella tularensis subsp. tularensis (strain SCHU S4 / Schu 4).